The chain runs to 577 residues: Arginine--tRNA ligase (577 aa).

Residues Pro-122–His-132 carry the 'HIGH' region motif.

This sequence belongs to the class-I aminoacyl-tRNA synthetase family. Monomer.

The protein resides in the cytoplasm. The enzyme catalyses tRNA(Arg) + L-arginine + ATP = L-arginyl-tRNA(Arg) + AMP + diphosphate. This is Arginine--tRNA ligase from Escherichia coli (strain K12 / MC4100 / BW2952).